Reading from the N-terminus, the 461-residue chain is Argininosuccinate lyase (461 aa).

The protein belongs to the lyase 1 family. Argininosuccinate lyase subfamily.

Its subcellular location is the cytoplasm. It catalyses the reaction 2-(N(omega)-L-arginino)succinate = fumarate + L-arginine. It functions in the pathway amino-acid biosynthesis; L-arginine biosynthesis; L-arginine from L-ornithine and carbamoyl phosphate: step 3/3. This chain is Argininosuccinate lyase, found in Aeromonas salmonicida (strain A449).